A 492-amino-acid polypeptide reads, in one-letter code: 2,3-bisphosphoglycerate-independent phosphoglycerate mutase (492 aa).

Positions 11 and 61 each coordinate Mn(2+). Catalysis depends on Ser-61, which acts as the Phosphoserine intermediate. Substrate-binding positions include His-118, 147 to 148 (RD), Arg-178, Arg-184, 248 to 251 (RNDR), and Lys-320. The Mn(2+) site is built by Asp-386, His-390, Asp-427, His-428, and His-445.

It belongs to the BPG-independent phosphoglycerate mutase family. Monomer. Requires Mn(2+) as cofactor.

It carries out the reaction (2R)-2-phosphoglycerate = (2R)-3-phosphoglycerate. The protein operates within carbohydrate degradation; glycolysis; pyruvate from D-glyceraldehyde 3-phosphate: step 3/5. Functionally, catalyzes the interconversion of 2-phosphoglycerate and 3-phosphoglycerate. This chain is 2,3-bisphosphoglycerate-independent phosphoglycerate mutase, found in Campylobacter jejuni subsp. jejuni serotype O:2 (strain ATCC 700819 / NCTC 11168).